The following is an 879-amino-acid chain: Alanine--tRNA ligase (879 aa).

Residues His-566, His-570, Cys-668, and His-672 each coordinate Zn(2+).

It belongs to the class-II aminoacyl-tRNA synthetase family. It depends on Zn(2+) as a cofactor.

The protein localises to the cytoplasm. The enzyme catalyses tRNA(Ala) + L-alanine + ATP = L-alanyl-tRNA(Ala) + AMP + diphosphate. In terms of biological role, catalyzes the attachment of alanine to tRNA(Ala) in a two-step reaction: alanine is first activated by ATP to form Ala-AMP and then transferred to the acceptor end of tRNA(Ala). Also edits incorrectly charged Ser-tRNA(Ala) and Gly-tRNA(Ala) via its editing domain. The protein is Alanine--tRNA ligase of Clostridium tetani (strain Massachusetts / E88).